Consider the following 321-residue polypeptide: MVEIVGHRAFKARYPENTLLAFEKAYAAGADVIETDLQMTSDGMVVVNHDSDTGRMWDKNLVIGESTWEEVKRLRCKEDGSLAMMTLKEILTWAVCHPGAKLMLDIKFTNEKIIMIKTFVIMLEVKNDLKFWQERITWGLWLLDWYDFGIETGVLKDFKVIVISLSLDIASQFVKRSLTLNDPHYKLFGISVHFVSSWTSQFRLRLLPVLMKNDIKVYLWTVNKPIDFKYLCELPIHGAITDDPIKARKLCDGHTVAKKPTAEKKFVAPSLASVDGLRFHAFIKVYNILCTLLYSKWVHIKLCGWSIAYVIFLFLRTIHFL.

The GP-PDE domain occupies 2–251 (VEIVGHRAFK…DDPIKARKLC (250 aa)). Residues 297–315 (WVHIKLCGWSIAYVIFLFL) traverse the membrane as a helical; Anchor for type IV membrane protein segment.

The protein belongs to the glycerophosphoryl diester phosphodiesterase family.

It localises to the mitochondrion membrane. It is found in the lipid droplet. The enzyme catalyses a 1,2-diacyl-sn-glycero-3-phospho-(1'-sn-glycerol) + H2O = sn-glycerol 3-phosphate + a 1,2-diacyl-sn-glycerol + H(+). Its function is as follows. Phosphatidylglycerol phospholipase required for the removal of excess phosphatidylglycerol (PG) via a phospholipase C-type degradation mechanism. In Saccharomyces cerevisiae (strain ATCC 204508 / S288c) (Baker's yeast), this protein is Phosphatidylglycerol phospholipase C (PGC1).